The following is a 163-amino-acid chain: Transcriptional repressor NrdR (163 aa).

Residues 3–34 (CPFCAHPEDKVVDSRESKEGESIRRRRECLKC) fold into a zinc finger. Residues 49-139 (YMVVKKDGRR…VYLDFKDVRE (91 aa)) enclose the ATP-cone domain.

The protein belongs to the NrdR family. The cofactor is Zn(2+).

In terms of biological role, negatively regulates transcription of bacterial ribonucleotide reductase nrd genes and operons by binding to NrdR-boxes. The chain is Transcriptional repressor NrdR from Koribacter versatilis (strain Ellin345).